The primary structure comprises 202 residues: uncharacterized protein (202 aa).

The disordered stretch occupies residues 1–20 (MVGAVTQIADRPTDPSPWSP). Positions 19-79 (SPRETELLAV…AAFIEGIRQV (61 aa)) constitute an HTH tetR-type domain.

This is an uncharacterized protein from Mycobacterium bovis (strain ATCC BAA-935 / AF2122/97).